The primary structure comprises 986 residues: DNA polymerase I (986 aa).

A 5'-3' exonuclease domain is found at 1 to 303; that stretch reads MFMSAKSPLL…RTFIDKIQAF (303 aa). The 289-residue stretch at 304–592 folds into the 3'-5' exonuclease domain; it reads HRNFSDNQSP…MEDRGIRIDC (289 aa). The interval 308–327 is disordered; sequence SDNQSPVPMGNEADNGEPKK. The segment at 593-986 is polymerase; that stretch reads DYLQTLSQQL…HRGSNWMEAK (394 aa).

It belongs to the DNA polymerase type-A family. As to quaternary structure, single-chain monomer with multiple functions.

It catalyses the reaction DNA(n) + a 2'-deoxyribonucleoside 5'-triphosphate = DNA(n+1) + diphosphate. In terms of biological role, in addition to polymerase activity, this DNA polymerase exhibits 3'-5' and 5'-3' exonuclease activity. The protein is DNA polymerase I (polA) of Synechocystis sp. (strain ATCC 27184 / PCC 6803 / Kazusa).